The chain runs to 296 residues: Partitioning protein REP2 (296 aa).

N-acetylmethionine is present on Met-1. Positions 1–57 (MDDIETAKNLTVKARTAYSVWDVCRLFIEMIAPDVDIDIESKRKSDELLFPGYVIRP) are interaction with REP1. Residues 58-296 (MESLTTGRPY…GRKSRNTSRV (239 aa)) form a DNA-binding, and self-association region. A disordered region spans residues 228 to 296 (SELEGRTEVN…GRKSRNTSRV (69 aa)). A compositionally biased stretch (basic residues) spans 275-296 (PTKKRRVATRVRGRKSRNTSRV). The segment at 276 to 296 (TKKRRVATRVRGRKSRNTSRV) is nuclear localization.

In terms of assembly, interacts with REP1.

It is found in the nucleus. Part of the plasmid partitioning system, which ensures the equal distribution of replicated plasmid molecules to daughter cells. The plasmids exist as well-organized plasmid foci within the nucleus that stay together throughout the cell-cycle and act as entity during segregation, effetively reducing copy number to one. Plasmid partitioning requires the proteins REP1, REP2, and a cis-acting locus STB (REP3). REP1-REP2 stably associate with CSE4-containing chromatin at STB during S-phase, marking the locus with a centromeric tag, and thereby probably catching mitotic spindle microtubules to the plasmid cluster and coupling plasmid segregation to chromosome segregation. REP1-REP2 are required to recruit the cohesin complex to the STB locus for pairing of the replicated plasmid cluster, a prerequisite for successful plasmid segregation. REP1-REP2 also negatively regulate expression of site-specific recombinase FLP and of RAF1. The sequence is that of Partitioning protein REP2 (REP2) from Saccharomyces cerevisiae (strain ATCC 204508 / S288c) (Baker's yeast).